A 679-amino-acid polypeptide reads, in one-letter code: tRNA uridine 5-carboxymethylaminomethyl modification enzyme MnmG (679 aa).

15–20 provides a ligand contact to FAD; it reads GAGHAG. 314–328 is a binding site for NAD(+); it reads GPRYCPSIEDKIVRF.

This sequence belongs to the MnmG family. As to quaternary structure, homodimer. Heterotetramer of two MnmE and two MnmG subunits. The cofactor is FAD.

The protein resides in the cytoplasm. Its function is as follows. NAD-binding protein involved in the addition of a carboxymethylaminomethyl (cmnm) group at the wobble position (U34) of certain tRNAs, forming tRNA-cmnm(5)s(2)U34. The protein is tRNA uridine 5-carboxymethylaminomethyl modification enzyme MnmG of Roseiflexus sp. (strain RS-1).